A 504-amino-acid polypeptide reads, in one-letter code: Hydroxyisobutyraldehyde dehydrogenase (504 aa).

The active-site Proton acceptor is Glu260. Cys294 acts as the Nucleophile in catalysis.

The protein belongs to the aldehyde dehydrogenase family.

It is found in the cytoplasm. The enzyme catalyses 2-hydroxy-2-methylpropanal + NAD(+) + H2O = 2-hydroxy-2-methylpropanoate + NADH + 2 H(+). Involved in the degradation of methyl tert-butyl ether (MTBE). Catalyzes the conversion of hydroxyisobutyraldehyde to hydroxyisobutyric acid (HIBA). In Mycolicibacterium austroafricanum (Mycobacterium austroafricanum), this protein is Hydroxyisobutyraldehyde dehydrogenase.